We begin with the raw amino-acid sequence, 152 residues long: Transcriptional regulator MraZ (152 aa).

SpoVT-AbrB domains are found at residues 7–54 (INSI…TMDE) and 83–126 (ASEM…SQEA).

This sequence belongs to the MraZ family. In terms of assembly, forms oligomers.

The protein resides in the cytoplasm. It localises to the nucleoid. This is Transcriptional regulator MraZ from Hydrogenovibrio crunogenus (strain DSM 25203 / XCL-2) (Thiomicrospira crunogena).